A 149-amino-acid polypeptide reads, in one-letter code: Hydroalkoxylation enzyme phnH (149 aa).

A signal peptide spans 1-18; it reads MKFTYLVSLAAFAVTALG. Residues asparagine 33 and asparagine 127 are each glycosylated (N-linked (GlcNAc...) asparagine).

As to quaternary structure, homotetramer.

It carries out the reaction 2,4,7,9-tetrahydroxy-6-methyl-8-(2-methylbut-3-en-2-yl)-1-oxo-1H-phenalen-3-ol = (2'R)-atrovenetin. It functions in the pathway secondary metabolite biosynthesis. Hydroalkoxylation enzyme; part of the gene cluster that mediates the biosynthesis of phenalenones such as herqueinone, compounds that have been reported to treat tumors, bacterial infections and/or mycoses, and rheumatic diseases. The non-reducing polyketide synthase phnA synthesizes the heptaketide backbone and cyclizes it into the angular, hemiketal-containing naphtho-gamma-pyrone prephenalenone. The product template (PT) domain of phnA catalyzes only the C4-C9 aldol condensation, which is unprecedented among known PT domains. The transformation of prephenalenone to phenalenones requires an FAD-dependent monooxygenase phnB, which catalyzes the C2 aromatic hydroxylation of prephenalenone and ring opening of the gamma-pyrone ring simultaneously. Subsequent intramolecular deprotonation of C3 phenolic oxygen accelerates phenalenone ring closure to yield the tricyclic phenalenone core with a C2 hydroxylation. The prenyltransferase phnF further catalyzes reverse C-prenylation of phenalenone by direct electrophilic substitution at C6, or possibly via first a forward O-prenylation of a neighboring phenol in phenalenone, followed by a Claisen rearrangement. The hydroalkoxylation enzyme phnH catalyzes the 5-exo-trig cyclization via acid catalysis after the spontaneous deprotonation of 7-OH, which leads to the formation of the dihydrobenzofuran atrovenetin. Atrovenetin is further converted to deoxyherqueinone by the O-methyltransferase phnC which can methylate C2-OH to stabilize the northern portion of the phenalenone core. Finally, the oxidoreductase phnG converts deoxyherqueinone to herqueinone via C6 hydroxylation. The polypeptide is Hydroalkoxylation enzyme phnH (Penicillium herquei).